The chain runs to 87 residues: MHTNWQVCSLVVQAKSERISDISTQLNAFPGCEVAVSDAPSGQLIVVVEAEDSETLIQTIESVRNVEGVLAVSLVYHQQEEQGEETP.

Belongs to the NapD family. As to quaternary structure, interacts with the cytoplasmic NapA precursor.

Its subcellular location is the cytoplasm. Its function is as follows. Chaperone for NapA, the catalytic subunit of the periplasmic nitrate reductase. It binds directly and specifically to the twin-arginine signal peptide of NapA, preventing premature interaction with the Tat translocase and premature export. The polypeptide is Chaperone NapD (Escherichia coli O157:H7).